The chain runs to 639 residues: Protein zwilch homolog (639 aa).

Positions Q76–K95 are enriched in basic and acidic residues. The tract at residues Q76–T116 is disordered. Over residues E96–A105 the composition is skewed to acidic residues.

Belongs to the ZWILCH family. As to quaternary structure, component of the RZZ complex composed of rod-1, czw-1 and zwl-1. Interacts with the spindly-like protein spdl-1. Interacts with NDC80 complex component ndc-80.

Its subcellular location is the cytoplasm. The protein localises to the cell cortex. It is found in the chromosome. The protein resides in the centromere. It localises to the kinetochore. Its subcellular location is the cytoskeleton. The protein localises to the spindle. Functionally, essential component of the mitotic checkpoint, which prevents cells from prematurely exiting mitosis. Required for chromosome segregation, the assembly of the dynein-dynactin and mdf-1-mdf-2 complexes onto kinetochores and spindle pole separation. Its function related to the spindle assembly machinery and kinetochore-microtubule attachments likely depends on its association in the mitotic RZZ complex. The RZZ complex recruits the spindly-like protein spdl-1 to kinetochores. To prevent irregular chromosome segregation, the complex also inhibits the attachment of the kinetochore-associated NDC80 complex to microtubules. The recruitment of spdl-1 to kinetochores relieves this inhibition. Required for embryonic development. This chain is Protein zwilch homolog (zwl-1), found in Caenorhabditis briggsae.